The primary structure comprises 686 residues: Methionine--tRNA ligase (686 aa).

A 'HIGH' region motif is present at residues 15-25; sequence PYANGPIHLGH. Zn(2+) contacts are provided by Cys146, Cys149, Cys159, and Cys162. Positions 331–335 match the 'KMSKS' region motif; the sequence is KMSKS. Lys334 is an ATP binding site. Residues 584-686 form the tRNA-binding domain; it reads DFAKIDLRVA…AGVKAGSRVM (103 aa).

Belongs to the class-I aminoacyl-tRNA synthetase family. MetG type 1 subfamily. Homodimer. Zn(2+) is required as a cofactor.

Its subcellular location is the cytoplasm. It catalyses the reaction tRNA(Met) + L-methionine + ATP = L-methionyl-tRNA(Met) + AMP + diphosphate. Its function is as follows. Is required not only for elongation of protein synthesis but also for the initiation of all mRNA translation through initiator tRNA(fMet) aminoacylation. In Mannheimia succiniciproducens (strain KCTC 0769BP / MBEL55E), this protein is Methionine--tRNA ligase.